We begin with the raw amino-acid sequence, 462 residues long: Proline--tRNA ligase (462 aa).

Belongs to the class-II aminoacyl-tRNA synthetase family. ProS type 3 subfamily. In terms of assembly, homodimer.

The protein localises to the cytoplasm. It carries out the reaction tRNA(Pro) + L-proline + ATP = L-prolyl-tRNA(Pro) + AMP + diphosphate. Catalyzes the attachment of proline to tRNA(Pro) in a two-step reaction: proline is first activated by ATP to form Pro-AMP and then transferred to the acceptor end of tRNA(Pro). The polypeptide is Proline--tRNA ligase (Thermoplasma acidophilum (strain ATCC 25905 / DSM 1728 / JCM 9062 / NBRC 15155 / AMRC-C165)).